The chain runs to 84 residues: Kappa-conotoxin-like Im11.3 (84 aa).

An N-terminal signal peptide occupies residues 1–26; the sequence is MMFRLTSVSCFLLVIACLNLFQVVLT. Disulfide bonds link Cys-29-Cys-43, Cys-36-Cys-48, Cys-42-Cys-51, and Cys-47-Cys-64. Positions 71–84 are excised as a propeptide; the sequence is LRPSHPLFLLLPAR.

The protein belongs to the conotoxin I2 superfamily. As to expression, expressed by the venom duct.

It is found in the secreted. In terms of biological role, inhibits the vertebrate voltage-gated potassium channels Kv1.1/KCNA1 and Kv1.3/KCNA3. This chain is Kappa-conotoxin-like Im11.3, found in Conus imperialis (Imperial cone).